A 432-amino-acid chain; its full sequence is Adenylosuccinate synthetase (432 aa).

GTP is bound by residues 12–18 (GDEGKGK) and 40–42 (GHT). The active-site Proton acceptor is the D13. 2 residues coordinate Mg(2+): D13 and G40. Residues 13–16 (DEGK), 38–41 (NAGH), T130, R144, Q225, T240, and R304 contribute to the IMP site. H41 serves as the catalytic Proton donor. 300 to 306 (ATTGRPR) contacts substrate. Residues R306, 332 to 334 (KLD), and 414 to 416 (SVG) contribute to the GTP site.

Belongs to the adenylosuccinate synthetase family. In terms of assembly, homodimer. It depends on Mg(2+) as a cofactor.

The protein resides in the cytoplasm. It carries out the reaction IMP + L-aspartate + GTP = N(6)-(1,2-dicarboxyethyl)-AMP + GDP + phosphate + 2 H(+). Its pathway is purine metabolism; AMP biosynthesis via de novo pathway; AMP from IMP: step 1/2. In terms of biological role, plays an important role in the de novo pathway of purine nucleotide biosynthesis. Catalyzes the first committed step in the biosynthesis of AMP from IMP. This chain is Adenylosuccinate synthetase, found in Anaeromyxobacter dehalogenans (strain 2CP-1 / ATCC BAA-258).